Consider the following 490-residue polypeptide: Transcription factor MYB101 (490 aa).

A disordered region spans residues methionine 1 to glycine 21. HTH myb-type domains are found at residues glycine 15 to leucine 67 and arginine 68 to glutamine 122. 2 DNA-binding regions (H-T-H motif) span residues tryptophan 43–leucine 67 and tryptophan 95–methionine 118. Residues tyrosine 168–proline 206 are disordered. Residues threonine 169–serine 186 are compositionally biased toward low complexity.

In terms of tissue distribution, present mostly in flowers, siliques and floral shoot tips. Expression is restricted to the subapical pith cells of both vegetative and flowering plants and to the hypocotyl hook. Expressed in pollen grains and pollen tube. Mostly expressed in mature pollen grains, and, to a lower extent, in inflorescences and siliques.

It is found in the nucleus. Transcription activator. Binds to 5'-CAACTGTC-3' and/or 5'-TAACAAA-3' motif in target gene promoter (e.g. alpha-amylase) to promote their expression. Positive regulator of abscisic acid (ABA) responses leading to growth arrest during seed germination. Promotes the expression of aleurone-related genes (e.g. CP1, CP, GASA1, BXL1 and BXL2) in seeds. Together with MYB33 and MYB65, promotes the programmed cell death (PCD) leading to vacuolation of protein storage vacuoles (PSVs) in the aleurone layers during seed germination. Maybe involved in the regulation of leaves lamina morphogenesis. Involved in pollen grain development. Together with MYB97 and MYB120, functions as a male factor that controls pollen tube-synergid interaction in fertilization. Required for pollen tube growth arrest and sperm cell release in the female gametophyte, probably via the regulation of pollen tube-specific gene expression. The sequence is that of Transcription factor MYB101 from Arabidopsis thaliana (Mouse-ear cress).